We begin with the raw amino-acid sequence, 234 residues long: Meiotically up-regulated gene 35 protein (234 aa).

Basic and acidic residues predominate over residues 126 to 156 (DSSGDLTSTDKERDVSPVSHSEKPYWDRYDL). Residues 126-176 (DSSGDLTSTDKERDVSPVSHSEKPYWDRYDLDQPSNQDVEESRNLVQEPKH) are disordered. Residues S127 and S128 each carry the phosphoserine modification. T132 carries the post-translational modification Phosphothreonine. S141 is subject to Phosphoserine.

It localises to the cytoplasm. In terms of biological role, has a role in meiosis. The polypeptide is Meiotically up-regulated gene 35 protein (mug35) (Schizosaccharomyces pombe (strain 972 / ATCC 24843) (Fission yeast)).